The sequence spans 194 residues: 2,4-dinitrotoluene dioxygenase system, small oxygenase component (194 aa).

It belongs to the bacterial ring-hydroxylating dioxygenase beta subunit family. The 2,4-dinitrotoluene dioxygenase (DNTDO) multicomponent enzyme system is composed of an electron transfer component and a dioxygenase component (iron sulfur protein (ISP)). The electron transfer component is composed of a ferredoxin reductase (DntAa) and a ferredoxin (DntAb), and the dioxygenase component is formed of a large alpha subunit (DntAc) and a small beta subunit (DntAd).

In terms of biological role, component of the 2,4-dinitrotoluene dioxygenase (DNTDO) multicomponent enzyme system which catalyzes the incorporation of both atoms of molecular oxygen into 2,4-dinitrotoluene (DNT) to form 4-methyl-5-nitrocatechol (MNC) and nitrite. The beta subunit seems to have a structural role in the holoenzyme. Also able to convert naphthalene to cis-(1R,2S)-dihydroxy-1,2-dihydronaphthalene. This Burkholderia sp. (strain RASC) protein is 2,4-dinitrotoluene dioxygenase system, small oxygenase component.